The sequence spans 635 residues: Moesin/ezrin/radixin homolog 2 (635 aa).

The 294-residue stretch at 12–305 (LSVRVSTFDS…GNHDLYMRRR (294 aa)) folds into the FERM domain.

As to quaternary structure, interacts with Moe and arm at the adherens junction. Forms a complex with Kibra and Ex. Interacts (via FERM domain) with Sav (via FBM motif). Interacts with Schip1. In terms of tissue distribution, expressed predominantly in the germline. Expressed in the developing oocyte from stage 6 to the end of oogenesis and in the apical ends of follical cells from stage 10. Ubiquitous expression throughout embryogenesis with enhanced expression in mesoderm of early embryos and midgut of late embryos. In embryonic CNS, expression is seen in neuropil and developing brain and is enhanced in neuronal cell bodies. In embryonic PNS, expression is seen within the cell body. In third instar larvae, expression is uniform in the eye imaginal disk and is enhanced at the morphogenetic furrow. In pupal eyes, expression is seen in the cytoplasm of secondary and tertiary pigment cells, bristle precursor cells and rhabdomeres.

Its subcellular location is the cell junction. It localises to the adherens junction. The protein localises to the cell membrane. It is found in the cytoplasm. The protein resides in the cytoskeleton. Its subcellular location is the apical cell membrane. It localises to the cell projection. The protein localises to the rhabdomere. Functionally, regulator of the Hippo/SWH (Sav/Wts/Hpo) signaling pathway, a signaling pathway that plays a pivotal role in organ size control and tumor suppression by restricting proliferation and promoting apoptosis. The core of this pathway is composed of a kinase cascade wherein Hippo (Hpo), in complex with its regulatory protein Salvador (Sav), phosphorylates and activates Warts (Wts) in complex with its regulatory protein Mats, which in turn phosphorylates and inactivates the Yorkie (Yki) oncoprotein. Mer acts synergistically along with Ex and Kibra to regulate the Hippo signaling pathway. This Drosophila melanogaster (Fruit fly) protein is Moesin/ezrin/radixin homolog 2 (Mer).